The primary structure comprises 119 residues: Ribosome-binding factor A (119 aa).

This sequence belongs to the RbfA family. As to quaternary structure, monomer. Binds 30S ribosomal subunits, but not 50S ribosomal subunits or 70S ribosomes.

Its subcellular location is the cytoplasm. In terms of biological role, one of several proteins that assist in the late maturation steps of the functional core of the 30S ribosomal subunit. Associates with free 30S ribosomal subunits (but not with 30S subunits that are part of 70S ribosomes or polysomes). Required for efficient processing of 16S rRNA. May interact with the 5'-terminal helix region of 16S rRNA. This is Ribosome-binding factor A from Limosilactobacillus reuteri (strain DSM 20016) (Lactobacillus reuteri).